Here is a 124-residue protein sequence, read N- to C-terminus: Probable glycine cleavage system H protein (124 aa).

The region spanning 25–106 is the Lipoyl-binding domain; it reads TATIGITDYA…PYGSWLVKMA (82 aa). An N6-lipoyllysine modification is found at lysine 66.

The protein belongs to the GcvH family. As to quaternary structure, the glycine cleavage system is composed of four proteins: P, T, L and H. (R)-lipoate is required as a cofactor.

The glycine cleavage system catalyzes the degradation of glycine. The H protein shuttles the methylamine group of glycine from the P protein to the T protein. In Thermoplasma acidophilum (strain ATCC 25905 / DSM 1728 / JCM 9062 / NBRC 15155 / AMRC-C165), this protein is Probable glycine cleavage system H protein.